Reading from the N-terminus, the 495-residue chain is Leucine aminopeptidase 2 (495 aa).

Residues 1–21 (MKSQLLSLAVAVSTISQGVVG) form the signal peptide. Residues 124–218 (PPANKIMAEL…EDGKNLASLV (95 aa)) form the PA domain. Asn-142 and Asn-235 each carry an N-linked (GlcNAc...) asparagine glycan. Residues His-259 and Asp-271 each coordinate Zn(2+). N-linked (GlcNAc...) asparagine glycosylation occurs at Asn-272. Glu-303 (proton acceptor) is an active-site residue. Residues Glu-304 and Asp-332 each coordinate Zn(2+). A glycan (N-linked (GlcNAc...) asparagine) is linked at Asn-352. His-430 is a binding site for Zn(2+).

This sequence belongs to the peptidase M28 family. M28A subfamily. Monomer. Requires Zn(2+) as cofactor.

The protein localises to the secreted. In terms of biological role, extracellular aminopeptidase that releases a wide variety of amino acids from natural peptides and contributes to pathogenicity. In Trichophyton tonsurans (Scalp ringworm fungus), this protein is Leucine aminopeptidase 2 (LAP2).